The following is a 404-amino-acid chain: Zinc finger CCCH domain-containing protein 3 (404 aa).

C3H1-type zinc fingers lie at residues 47–75, 90–118, 135–163, 261–289, and 307–335; these read RPGERDCQFYLRTGLCGYGSSCRYNHPTH, RIGQPDCEYFLKTGACKYGPTCKYHHPKD, RLGEKPCPYYLRTGTCRFGVACKFHHPQP, SSDQPECRFFMNTGTCKYGDDCKYSHPGV, and RPGQPACGNFRSYGFCKFGPNCKFDHPML. Positions 350 to 374 are enriched in polar residues; that stretch reads FASPVTTHQRISPTPNRSDSKSLSN. A disordered region spans residues 350 to 404; sequence FASPVTTHQRISPTPNRSDSKSLSNGKPDVKKESSETEKPDNGEVQDLSEDASSP. Over residues 377-391 the composition is skewed to basic and acidic residues; sequence PDVKKESSETEKPDN.

The protein resides in the nucleus. Its function is as follows. Possesses RNA-binding and ribonuclease activities in vitro. The chain is Zinc finger CCCH domain-containing protein 3 from Arabidopsis thaliana (Mouse-ear cress).